Here is a 259-residue protein sequence, read N- to C-terminus: tRNA pseudouridine synthase A (259 aa).

The active-site Nucleophile is the aspartate 52. Tyrosine 113 serves as a coordination point for substrate.

It belongs to the tRNA pseudouridine synthase TruA family. As to quaternary structure, homodimer.

It catalyses the reaction uridine(38/39/40) in tRNA = pseudouridine(38/39/40) in tRNA. Formation of pseudouridine at positions 38, 39 and 40 in the anticodon stem and loop of transfer RNAs. This is tRNA pseudouridine synthase A from Allorhizobium ampelinum (strain ATCC BAA-846 / DSM 112012 / S4) (Agrobacterium vitis (strain S4)).